A 435-amino-acid chain; its full sequence is Transcription factor tau 55 kDa subunit (435 aa).

The segment at 362 to 417 (GLLSPTEENETTNAGQSKGSSTANDPNIQIQEEDVGLPDSTNTSRDHTGDKEEVQS) is disordered. The residue at position 365 (S365) is a Phosphoserine. A compositionally biased stretch (polar residues) spans 372-391 (TTNAGQSKGSSTANDPNIQI). Residues 405-417 (SRDHTGDKEEVQS) show a composition bias toward basic and acidic residues.

As to quaternary structure, component of the TFIIIC complex composed of TFC1, TFC3, TFC4, TFC6, TFC7 and TFC8. The subunits are organized in two globular domains, tauA and tauB, connected by a proteolysis-sensitive and flexible linker.

It is found in the nucleus. Its function is as follows. TFIIIC mediates tRNA and 5S RNA gene activation by binding to intragenic promoter elements. Upstream of the transcription start site, TFIIIC assembles the initiation complex TFIIIB-TFIIIC-tDNA, which is sufficient for RNA polymerase III recruitment and function. Part of the tauA domain of TFIIIC that binds boxA DNA promoter sites of tRNA and similar genes. This is Transcription factor tau 55 kDa subunit (TFC7) from Saccharomyces cerevisiae (strain ATCC 204508 / S288c) (Baker's yeast).